The primary structure comprises 106 residues: Iron-sulfur cluster assembly protein CyaY (106 aa).

This sequence belongs to the frataxin family.

Functionally, involved in iron-sulfur (Fe-S) cluster assembly. May act as a regulator of Fe-S biogenesis. In Dickeya chrysanthemi (Pectobacterium chrysanthemi), this protein is Iron-sulfur cluster assembly protein CyaY.